We begin with the raw amino-acid sequence, 81 residues long: Sulfur carrier protein TusA (81 aa).

Residue cysteine 19 is the Cysteine persulfide intermediate of the active site.

It belongs to the sulfur carrier protein TusA family. In terms of assembly, interacts with IscS.

It is found in the cytoplasm. It participates in tRNA modification. Its function is as follows. Sulfur carrier protein involved in sulfur trafficking in the cell. Part of a sulfur-relay system required for 2-thiolation during synthesis of 2-thiouridine of the modified wobble base 5-methylaminomethyl-2-thiouridine (mnm(5)s(2)U) in tRNA. Interacts with IscS and stimulates its cysteine desulfurase activity. Accepts an activated sulfur from IscS, which is then transferred to TusD, and thus determines the direction of sulfur flow from IscS to 2-thiouridine formation. Also appears to be involved in sulfur transfer for the biosynthesis of molybdopterin. This is Sulfur carrier protein TusA from Shigella boydii serotype 18 (strain CDC 3083-94 / BS512).